Consider the following 509-residue polypeptide: Hexokinase-4, chloroplastic (509 aa).

The N-terminal 37 residues, 1–37, are a transit peptide targeting the chloroplast; it reads MSAAAAIASPIPAAIAVVQQQRRGRSRGGGSGAAAVR. Residues 45–496 form the Hexokinase domain; the sequence is SAIAPILADL…SGIGAALLAA (452 aa). The hexokinase small subdomain stretch occupies residues 100-238; the sequence is TGNETGLFYA…GLDMRVSALV (139 aa). ADP is bound by residues G114, T115, and N116. T204, K205, N239, and D240 together coordinate D-glucose. A hexokinase large subdomain region spans residues 239–485; that stretch reads NDTVGTLAGA…NRIAIEHTKD (247 aa). Residue T263 participates in ADP binding. Positions 266, 294, and 324 each coordinate D-glucose. G450 is a binding site for ADP.

This sequence belongs to the hexokinase family. Expressed in roots, leaves, flowers, immature seeds, endosperm and seed coat.

Its subcellular location is the plastid. It is found in the chloroplast stroma. The catalysed reaction is a D-hexose + ATP = a D-hexose 6-phosphate + ADP + H(+). It carries out the reaction D-fructose + ATP = D-fructose 6-phosphate + ADP + H(+). The enzyme catalyses D-glucose + ATP = D-glucose 6-phosphate + ADP + H(+). It participates in carbohydrate metabolism; hexose metabolism. Its pathway is carbohydrate degradation; glycolysis; D-glyceraldehyde 3-phosphate and glycerone phosphate from D-glucose: step 1/4. In terms of biological role, fructose and glucose phosphorylating enzyme. The polypeptide is Hexokinase-4, chloroplastic (HXK4) (Oryza sativa subsp. japonica (Rice)).